The chain runs to 445 residues: Phosphoglucosamine mutase (445 aa).

The active-site Phosphoserine intermediate is the Ser-102. Mg(2+) is bound by residues Ser-102, Asp-241, Asp-243, and Asp-245. Ser-102 carries the post-translational modification Phosphoserine.

It belongs to the phosphohexose mutase family. Mg(2+) is required as a cofactor. In terms of processing, activated by phosphorylation.

The enzyme catalyses alpha-D-glucosamine 1-phosphate = D-glucosamine 6-phosphate. Catalyzes the conversion of glucosamine-6-phosphate to glucosamine-1-phosphate. In Shigella boydii serotype 4 (strain Sb227), this protein is Phosphoglucosamine mutase.